A 423-amino-acid chain; its full sequence is Glycine amidinotransferase, mitochondrial (423 aa).

The N-terminal 48 residues, 1 to 48 (MLRVRCLRGGSRGAEAVHYIGSRLGRTLTGWVQRTFQSTQAATASSRN), are a transit peptide targeting the mitochondrion. The segment covering 39–51 (TQAATASSRNSSA) has biased composition (low complexity). Positions 39 to 65 (TQAATASSRNSSAADDKATEPLPKDCP) are disordered. Phosphoserine is present on residues serine 46 and serine 49. Over residues 52–61 (ADDKATEPLP) the composition is skewed to basic and acidic residues. Residue aspartate 170 participates in arginine binding. Residues aspartate 254 and histidine 303 contribute to the active site. Arginine-binding residues include aspartate 305, arginine 322, serine 354, and serine 355. An N6-acetyllysine modification is found at lysine 385. Residue cysteine 407 is the Amidino-cysteine intermediate of the active site.

It belongs to the amidinotransferase family. In terms of assembly, homodimer.

Its subcellular location is the mitochondrion inner membrane. The catalysed reaction is L-arginine + glycine = guanidinoacetate + L-ornithine. It carries out the reaction 4-aminobutanoate + L-arginine = 4-guanidinobutanoate + L-ornithine. It catalyses the reaction beta-alanine + L-arginine = 3-guanidinopropanoate + L-ornithine. The enzyme catalyses taurine + L-arginine = taurocyamine + L-ornithine. It functions in the pathway amine and polyamine biosynthesis; creatine biosynthesis; creatine from L-arginine and glycine: step 1/2. In terms of biological role, transamidinase that catalyzes the transfer of the amidino group of L-arginine onto the amino moiety of acceptor metabolites such as glycine, beta-alanine, gamma-aminobutyric acid (GABA) and taurine yielding the corresponding guanidine derivatives. Catalyzes the rate-limiting step of creatine biosynthesis, namely the transfer of the amidino group from L-arginine to glycine to generate guanidinoacetate, which is then methylated by GAMT to form creatine. Provides creatine as a source for ATP generation in tissues with high energy demands, in particular skeletal muscle, heart and brain. This is Glycine amidinotransferase, mitochondrial (GATM) from Pongo abelii (Sumatran orangutan).